The chain runs to 110 residues: MKKTLSVLFTAFSFCVIGFTQVAFAADLDNGEKVFSANCAACHAGGNNAIMPDKTLKKDVLEANSMNGIDAITYQVTNGKNAMPAFGGRLVDEDIEDAANYVLSQSEKGW.

The first 25 residues, 1–25, serve as a signal peptide directing secretion; it reads MKKTLSVLFTAFSFCVIGFTQVAFA. Heme c is bound by residues cysteine 39, cysteine 42, histidine 43, and methionine 83.

This sequence belongs to the cytochrome c family. PetJ subfamily. In terms of assembly, monomer. In terms of processing, binds 1 heme c group covalently per subunit.

It localises to the plastid. It is found in the chloroplast thylakoid lumen. Functionally, functions as an electron carrier between membrane-bound cytochrome b6-f and photosystem I in oxygenic photosynthesis. The chain is Cytochrome c6 (petJ) from Porphyra purpurea (Red seaweed).